A 339-amino-acid chain; its full sequence is Annexin A2 (339 aa).

Serine 2 carries the N-acetylserine modification. Residues 2–24 form an S100A10-binding site region; the sequence is STVHEILCKLSLEGDHSTPPSAY. Phosphotyrosine; by SRC is present on tyrosine 24. Serine 26 bears the Phosphoserine; by PKC mark. Annexin repeat units lie at residues 33–104 and 105–176; these read FDAE…GLLK and TPAQ…ALAK. At lysine 49 the chain carries N6-acetyllysine; alternate. Lysine 49 is covalently cross-linked (Glycyl lysine isopeptide (Lys-Gly) (interchain with G-Cter in SUMO1); alternate). A Glycyl lysine isopeptide (Lys-Gly) (interchain with G-Cter in SUMO2); alternate cross-link involves residue lysine 49. Position 152 is an N6-acetyllysine (lysine 152). Residue serine 184 is modified to Phosphoserine. 2 Annexin repeats span residues 189 to 261 and 265 to 336; these read ELID…NLVQ and NKPL…YLCG. Tyrosine 199 carries the post-translational modification Phosphotyrosine. Lysine 227 carries the N6-acetyllysine modification.

This sequence belongs to the annexin family. In terms of assembly, heterotetramer containing 2 light chains of S100A10/p11 and 2 heavy chains of ANXA2/p36. Interacts with ATP1B1. Interacts with DYSF. Interacts with COCH. Interacts (via repeat Annexin 1) with PCSK9 (via the C-terminal domain); the interaction inhibits the degradation of LDLR. Interacts with CEACAM1 (via the cytoplasmic domain); this interaction is regulated by phosphorylation of CEACAM1. Interacts with APPL2 and APPL1; targets APPL2 to endosomes and acting in parallel to RAB5A. Interacts with S100A4. May interact with UBAP2. Interacts with PLEKHG4B; this interaction is required for PLEKHG4B localization to cell-cell adhesions. ISGylated.

The protein resides in the secreted. The protein localises to the extracellular space. It is found in the extracellular matrix. Its subcellular location is the basement membrane. Calcium-regulated membrane-binding protein whose affinity for calcium is greatly enhanced by anionic phospholipids. It binds two calcium ions with high affinity. May be involved in heat-stress response. Inhibits PCSK9-enhanced LDLR degradation, probably reduces PCSK9 protein levels via a translational mechanism but also competes with LDLR for binding with PCSK9. Binds to endosomes damaged by phagocytosis of particulate wear debris and participates in endosomal membrane stabilization, thereby limiting NLRP3 inflammasome activation. Required for endothelial cell surface plasmin generation and may support fibrinolytic surveillance and neoangiogenesis. This is Annexin A2 (ANXA2) from Canis lupus familiaris (Dog).